The primary structure comprises 278 residues: Formamidopyrimidine-DNA glycosylase (278 aa).

Residue P2 is the Schiff-base intermediate with DNA of the active site. E3 functions as the Proton donor in the catalytic mechanism. K59 serves as the catalytic Proton donor; for beta-elimination activity. Positions 93, 112, and 153 each coordinate DNA. Residues 238-272 form an FPG-type zinc finger; sequence NVYDRAGEPCPRCQSTIERIVVAQRSTYFCPTCQI. R262 (proton donor; for delta-elimination activity) is an active-site residue.

Belongs to the FPG family. Monomer. The cofactor is Zn(2+).

The catalysed reaction is Hydrolysis of DNA containing ring-opened 7-methylguanine residues, releasing 2,6-diamino-4-hydroxy-5-(N-methyl)formamidopyrimidine.. The enzyme catalyses 2'-deoxyribonucleotide-(2'-deoxyribose 5'-phosphate)-2'-deoxyribonucleotide-DNA = a 3'-end 2'-deoxyribonucleotide-(2,3-dehydro-2,3-deoxyribose 5'-phosphate)-DNA + a 5'-end 5'-phospho-2'-deoxyribonucleoside-DNA + H(+). Its function is as follows. Involved in base excision repair of DNA damaged by oxidation or by mutagenic agents. Acts as a DNA glycosylase that recognizes and removes damaged bases. Has a preference for oxidized purines, such as 7,8-dihydro-8-oxoguanine (8-oxoG). Has AP (apurinic/apyrimidinic) lyase activity and introduces nicks in the DNA strand. Cleaves the DNA backbone by beta-delta elimination to generate a single-strand break at the site of the removed base with both 3'- and 5'-phosphates. The chain is Formamidopyrimidine-DNA glycosylase from Chloroflexus aurantiacus (strain ATCC 29366 / DSM 635 / J-10-fl).